A 446-amino-acid polypeptide reads, in one-letter code: tRNA modification GTPase MnmE (446 aa).

Residues Arg-24, Glu-81, and Lys-120 each coordinate (6S)-5-formyl-5,6,7,8-tetrahydrofolate. Positions 216–368 (GLHAVLIGPP…LHIRLRELAL (153 aa)) constitute a TrmE-type G domain. K(+) is bound at residue Asn-226. Residues 226–231 (NAGKSS), 245–251 (TDVAGTT), and 270–273 (DTAG) each bind GTP. Residue Ser-230 participates in Mg(2+) binding. Residues Thr-245, Val-247, and Thr-250 each coordinate K(+). A Mg(2+)-binding site is contributed by Thr-251. Lys-446 serves as a coordination point for (6S)-5-formyl-5,6,7,8-tetrahydrofolate.

It belongs to the TRAFAC class TrmE-Era-EngA-EngB-Septin-like GTPase superfamily. TrmE GTPase family. As to quaternary structure, homodimer. Heterotetramer of two MnmE and two MnmG subunits. It depends on K(+) as a cofactor.

The protein localises to the cytoplasm. In terms of biological role, exhibits a very high intrinsic GTPase hydrolysis rate. Involved in the addition of a carboxymethylaminomethyl (cmnm) group at the wobble position (U34) of certain tRNAs, forming tRNA-cmnm(5)s(2)U34. This Xanthomonas oryzae pv. oryzae (strain MAFF 311018) protein is tRNA modification GTPase MnmE.